A 118-amino-acid chain; its full sequence is Large ribosomal subunit protein bL20 (118 aa).

This sequence belongs to the bacterial ribosomal protein bL20 family.

Binds directly to 23S ribosomal RNA and is necessary for the in vitro assembly process of the 50S ribosomal subunit. It is not involved in the protein synthesizing functions of that subunit. In Pseudoalteromonas atlantica (strain T6c / ATCC BAA-1087), this protein is Large ribosomal subunit protein bL20.